We begin with the raw amino-acid sequence, 149 residues long: Azurin (149 aa).

Positions 1–20 (MLAKATLAIVLSAASLPVLA) are cleaved as a signal peptide. One can recognise a Plastocyanin-like domain in the interval 21 to 149 (AQCEATIESN…MMKGTLKLSN (129 aa)). Cysteines 23 and 46 form a disulfide. Cu cation is bound by residues His66, Cys132, His137, and Met141.

It is found in the periplasm. Functionally, transfers electrons from cytochrome c551 to cytochrome oxidase. In Achromobacter denitrificans (Alcaligenes denitrificans), this protein is Azurin (azu).